The sequence spans 483 residues: Glutamyl-tRNA(Gln) amidotransferase subunit A (483 aa).

Active-site charge relay system residues include lysine 77 and serine 152. Serine 176 functions as the Acyl-ester intermediate in the catalytic mechanism.

The protein belongs to the amidase family. GatA subfamily. As to quaternary structure, heterotrimer of A, B and C subunits.

It catalyses the reaction L-glutamyl-tRNA(Gln) + L-glutamine + ATP + H2O = L-glutaminyl-tRNA(Gln) + L-glutamate + ADP + phosphate + H(+). In terms of biological role, allows the formation of correctly charged Gln-tRNA(Gln) through the transamidation of misacylated Glu-tRNA(Gln) in organisms which lack glutaminyl-tRNA synthetase. The reaction takes place in the presence of glutamine and ATP through an activated gamma-phospho-Glu-tRNA(Gln). This is Glutamyl-tRNA(Gln) amidotransferase subunit A from Listeria monocytogenes serovar 1/2a (strain ATCC BAA-679 / EGD-e).